Here is a 195-residue protein sequence, read N- to C-terminus: Flavin-dependent monooxygenase, reductase subunit HsaB (195 aa).

FAD contacts are provided by residues 42 to 46 (PVGFA), 48 to 49 (QS), 63 to 65 (CPT), 69 to 70 (RS), and 95 to 96 (RF). 160–163 (FYRG) serves as a coordination point for NAD(+).

The protein belongs to the non-flavoprotein flavin reductase family. In terms of assembly, hsaAB monooxygenase consists of an oxygenase component HsaA and a reductase component HsaB.

The catalysed reaction is a reduced flavin + NAD(+) = an oxidized flavin + NADH + 2 H(+). It functions in the pathway lipid metabolism; steroid biosynthesis. Functionally, catalyzes the reduction of free flavins (FMN or FAD) by NADH. Subsequently, the reduced flavins diffuse to the HsaA oxygenase subunit. This Rhodococcus jostii (strain RHA1) protein is Flavin-dependent monooxygenase, reductase subunit HsaB (hsaB).